Consider the following 303-residue polypeptide: uncharacterized protein (303 aa).

This is an uncharacterized protein from Magallana gigas (Pacific oyster).